Here is a 60-residue protein sequence, read N- to C-terminus: Metallothionein A (60 aa).

A beta region spans residues 1-28 (MDPCECSKSGTCNCGGSCTCTNCSCKSC). A divalent metal cation is bound by residues Cys-4, Cys-6, Cys-12, Cys-14, Cys-18, Cys-20, Cys-23, Cys-25, Cys-28, Cys-32, Cys-33, Cys-35, Cys-36, Cys-40, Cys-43, Cys-47, Cys-49, Cys-54, Cys-58, and Cys-59. The alpha stretch occupies residues 29–60 (KKSCCPCCPSGCTKCASGCVCKGKTCDTSCCQ).

Belongs to the metallothionein superfamily. Type 1 family.

Its function is as follows. Metallothioneins have a high content of cysteine residues that bind various heavy metals. This is Metallothionein A (mta) from Chionodraco rastrospinosus (Ocellated icefish).